Reading from the N-terminus, the 120-residue chain is Seripauperin-20 (120 aa).

Residues 7 to 25 (IAAGVAAIAAGASATTTLA) traverse the membrane as a helical segment.

Belongs to the SRP1/TIP1 family. Seripauperin subfamily.

The protein localises to the membrane. The polypeptide is Seripauperin-20 (PAU20) (Saccharomyces cerevisiae (strain ATCC 204508 / S288c) (Baker's yeast)).